A 308-amino-acid chain; its full sequence is D-alanine--D-alanine ligase (308 aa).

The ATP-grasp domain occupies 104 to 301; the sequence is KQIWQGSDLP…FDELCVAILE (198 aa). 130 to 185 lines the ATP pocket; the sequence is IAELGLPVIIKPVHEGSSVGMSKVEKAEDFAAAIEKATQHDAVVMAEKWITGREFT. Mg(2+)-binding residues include D255, E268, and N270.

The protein belongs to the D-alanine--D-alanine ligase family. Requires Mg(2+) as cofactor. Mn(2+) serves as cofactor.

Its subcellular location is the cytoplasm. It catalyses the reaction 2 D-alanine + ATP = D-alanyl-D-alanine + ADP + phosphate + H(+). The protein operates within cell wall biogenesis; peptidoglycan biosynthesis. In terms of biological role, cell wall formation. This chain is D-alanine--D-alanine ligase, found in Acinetobacter baumannii (strain ACICU).